A 300-amino-acid polypeptide reads, in one-letter code: Cholesterol 25-hydroxylase-like protein (300 aa).

Asn-9 is a glycosylation site (N-linked (GlcNAc...) asparagine). 3 helical membrane-spanning segments follow: residues 54–73 (YTWV…VPFF), 95–115 (LQGW…LIWV), and 130–152 (MLSQ…HYIN). In terms of domain architecture, Fatty acid hydroxylase spans 135 to 266 (AIFFLAFDFT…WFNYLDRLMG (132 aa)). The short motif at 148-152 (FHYIN) is the Histidine box-1 element. The Histidine box-2 motif lies at 163 to 167 (HSVHH). Residues 192 to 212 (ITTIPWIFPTHCLTYWIWFFI) form a helical membrane-spanning segment. The short motif at 242 to 248 (AHDMHHL) is the Histidine box-3 element.

Belongs to the sterol desaturase family. Requires Fe cation as cofactor.

Its subcellular location is the membrane. In terms of biological role, probable sterol desaturase. The polypeptide is Cholesterol 25-hydroxylase-like protein (Caenorhabditis elegans).